A 976-amino-acid chain; its full sequence is Synaptonemal complex protein 1 (976 aa).

Positions Gly101–Lys111 match the Mediates head to head self-assembly of N-terminal ends motif. The short motif at Lys117 to Lys120 is the Nuclear localization signal element. Positions Glu206–Gln362 are interaction with SYCE3. Coiled coils occupy residues Tyr211–Lys316, Leu391–Val439, Val499–Ala685, and Glu739–Thr798. Residues Glu676–Glu770 form a required for pH-induced assembly of C-terminal ends into antiparallel tetramers region. A Nuclear localization signal motif is present at residues Leu679–Val682. The segment at Asn784–Val976 is DNA-binding. The Nuclear localization signal motif lies at Lys880–Lys883.

As to quaternary structure, structural component of synaptonemal complexes. Homotetramer that consists of an N-terminal four-helical bundle that bifurcates into two elongated C-terminal dimeric coiled coils. This tetrameric building block potentially self-assembles into a supramolecular zipper-like lattice to mediate meiotic chromosome synapsis. Self-assembly is likely initiated by local proton density at chromosome axis, which is predicted to trigger antiparallel back to back assembly of adjacent C-terminal ends into tetrameric structures that anchor to chromosomal DNA. Then the N-terminal ends are predicted to undergo cooperative antiparallel head to head assembly at the midline of synaptonemal complexes central element to form a zipper-like lattice between properly aligned homologous chromosomes. The nascent synapsis generated by SYCP1 is stabilized through interaction with central element proteins SYCE1 and SYCE2. Interacts (via tetrameric core) with SYCE3; the interaction remodels SYCP1 homotetramers to 2:1 heterotrimers with SYCE3. SYCP1/SYCE3 heterotrimers form lattice assemblies as part of the mature synaptonemal complex via both lateral and head-to-head interactions. Forms a complex with EWSR1, PRDM9, SYCP3 and REC8; complex formation is dependent of phosphorylated form of REC8 and requires PRDM9 bound to hotspot DNA; EWSR1 joins PRDM9 with the chromosomal axis through REC8. Interacts with SPO16. In terms of tissue distribution, testis.

Its subcellular location is the nucleus. It localises to the chromosome. The protein resides in the centromere. Its function is as follows. Major component of the transverse filaments of synaptonemal complexes, formed between homologous chromosomes during meiotic prophase. Required for normal assembly of the central element of the synaptonemal complexes. Required for normal centromere pairing during meiosis. Required for normal meiotic chromosome synapsis during oocyte and spermatocyte development and for normal male and female fertility. This is Synaptonemal complex protein 1 from Homo sapiens (Human).